An 855-amino-acid polypeptide reads, in one-letter code: MICAL-like protein 1 (855 aa).

Positions 2–108 constitute a Calponin-homology (CH) domain; the sequence is AGPRGALLAW…YVSQYYNHFT (107 aa). 3 disordered regions span residues 110–165, 226–253, and 269–659; these read SGQA…SSAC, GRSGTRPLSLQKQQPAAAAEAKDGEDSD, and QASS…HGFP. Over residues 124–135 the composition is skewed to low complexity; the sequence is PAAPSPTSTSPA. In terms of domain architecture, LIM zinc-binding spans 163–226; that stretch reads SACAACGQRV…ERCTRLGLGG (64 aa). The segment covering 269 to 278 has biased composition (polar residues); it reads QASSEVQPHT. Phosphoserine is present on residues Ser293 and Ser307. Polar residues predominate over residues 308-325; the sequence is ESSALTPPTPRPRSSLQQ. Residues Thr313 and Thr316 each carry the phosphothreonine modification. Basic and acidic residues predominate over residues 356 to 367; that stretch reads LSERMTAPRKDP. Positions 423-425 match the NPF1 motif; the sequence is NPF. The span at 425–434 shows a compositional bias: acidic residues; sequence FEEEEEEEEA. Positions 439 to 449 are enriched in pro residues; sequence VPSPAPAPPET. A phosphothreonine mark is found at Thr461 and Thr463. Phosphoserine occurs at positions 464, 465, 478, and 480. A compositionally biased stretch (low complexity) spans 499–514; that stretch reads PSPALSVESLSSESSS. The span at 542–554 shows a compositional bias: polar residues; sequence PGTSANSVTPSAH. The segment covering 555 to 570 has biased composition (low complexity); the sequence is SSLSSSGELGQPSGEQ. Phosphoserine is present on Ser613. The short motif at 625–627 is the NPF2 element; sequence NPF. The mediates the interaction with RAB13 and intramolecular interaction with the calponin-homology (CH) domain stretch occupies residues 644 to 855; the sequence is KGAKPVRPPA…AKSKAPTGKS (212 aa). Residues 663–810 enclose the bMERB domain; it reads RKVQADQYIP…EEEEDKMLET (148 aa). Residues 679–703 adopt a coiled-coil conformation; the sequence is EMDSIERQLDALEHSGVLLEEKLRG. Phosphoserine occurs at positions 682 and 732. The segment at 692–855 is necessary and sufficient to associate with tubular recycling endosome membranes, mediate phosphatidic acid-binding and membrane tubulation; the sequence is HSGVLLEEKL…AKSKAPTGKS (164 aa). A coiled-coil region spans residues 794-822; it reads LDEDRQREEEEDKMLETMIKKKDFQREAE. Positions 815–826 are enriched in basic and acidic residues; it reads KDFQREAESDSK. Residues 815 to 855 form a disordered region; it reads KDFQREAESDSKKKGKFKTMKVLKLLGNKRDAKSKAPTGKS.

Homooligomer. Interacts (via NPF1 motif) with EHD1 (via EH domain); the interaction is direct and probably recruits EHD1 to membranes. Interacts with EHD3 (via EH domain). Interacts with RAB35 (GTP-bound form); the interaction is direct and probably recruits MICALL1 to membranes. Interacts with ACAP2; the interaction is indirect through RAB35. Interacts with RAB8A (GTP-bound form); regulates RAB8A association with recycling endosomes. Interacts with RAB13 (GTP-bound form). Interacts with ARF6 (GTP-bound form). Interacts with PACSIN2 (via the SH3 domain). Interacts with DPYSL2.

The protein localises to the recycling endosome membrane. Its subcellular location is the late endosome membrane. It localises to the cell projection. It is found in the cilium membrane. The protein resides in the cytoplasm. The protein localises to the cytoskeleton. Its subcellular location is the microtubule organizing center. It localises to the centrosome. It is found in the centriole. In terms of biological role, lipid-binding protein with higher affinity for phosphatidic acid, a lipid enriched in recycling endosome membranes. On endosome membranes, acts as a downstream effector of Rab proteins recruiting cytosolic proteins to regulate membrane tubulation. Involved in a late step of receptor-mediated endocytosis regulating for instance endocytosed-EGF receptor trafficking. Alternatively, regulates slow endocytic recycling of endocytosed proteins back to the plasma membrane. Also involved in cargo protein delivery to the plasma membrane. Plays a role in ciliogenesis coordination, recruits EHD1 to primary cilium where it is anchored to the centriole through interaction with tubulins. May indirectly play a role in neurite outgrowth. This is MICAL-like protein 1 (Micall1) from Rattus norvegicus (Rat).